Consider the following 577-residue polypeptide: Cytidine monophosphate-N-acetylneuraminic acid hydroxylase (577 aa).

A propeptide spanning residues 1-4 (MMDR) is cleaved from the precursor. A Rieske domain is found at 14–112 (LSPAEVANLK…IEMDENNGLS (99 aa)). [2Fe-2S] cluster-binding residues include cysteine 54, histidine 56, cysteine 75, and histidine 78.

Belongs to the CMP-Neu5Ac hydroxylase family. [2Fe-2S] cluster serves as cofactor. In terms of tissue distribution, expressed in all tissues tested, except in brain.

It is found in the cytoplasm. It localises to the endoplasmic reticulum. It carries out the reaction CMP-N-acetyl-beta-neuraminate + 2 Fe(II)-[cytochrome b5] + O2 + 2 H(+) = CMP-N-glycoloyl-beta-neuraminate + 2 Fe(III)-[cytochrome b5] + H2O. Its pathway is amino-sugar metabolism; N-acetylneuraminate metabolism. Sialic acids are components of carbohydrate chains of glycoconjugates and are involved in cell-cell recognition and cell-pathogen interactions. Catalyzes the conversion of CMP-N-acetylneuraminic acid (CMP-Neu5Ac) into its hydroxylated derivative CMP-N-glycolylneuraminic acid (CMP-Neu5Gc), a sialic acid abundantly expressed at the surface of many cells. The chain is Cytidine monophosphate-N-acetylneuraminic acid hydroxylase (Cmah) from Mus musculus (Mouse).